We begin with the raw amino-acid sequence, 316 residues long: Transaldolase (316 aa).

The active-site Schiff-base intermediate with substrate is Lys127.

The protein belongs to the transaldolase family. Type 2 subfamily.

The protein resides in the cytoplasm. It carries out the reaction D-sedoheptulose 7-phosphate + D-glyceraldehyde 3-phosphate = D-erythrose 4-phosphate + beta-D-fructose 6-phosphate. It functions in the pathway carbohydrate degradation; pentose phosphate pathway; D-glyceraldehyde 3-phosphate and beta-D-fructose 6-phosphate from D-ribose 5-phosphate and D-xylulose 5-phosphate (non-oxidative stage): step 2/3. Functionally, transaldolase is important for the balance of metabolites in the pentose-phosphate pathway. This Helicobacter pylori (strain HPAG1) protein is Transaldolase.